Consider the following 355-residue polypeptide: Ion-translocating oxidoreductase complex subunit D (355 aa).

Helical transmembrane passes span 13–33 (GKLTARIMLWVIFGMLPALAV), 35–55 (VYYFGFGVLIQICLAVALALI), 77–97 (VILTALILAMAIPPYAPYWVI), 98–118 (LIGTFCAVILGKHVYGGLGQN), and 128–148 (VVLLISFPVQMTGWMPPISLL). Threonine 186 carries the post-translational modification FMN phosphoryl threonine. A run of 5 helical transmembrane segments spans residues 216–236 (AGLGWLQVNLAFFIGGLFLIW), 245–265 (PVAILLSLGIFCGLFDLFGNA), 267–287 (AVGFFAQLFSGAMMFGAFFIA), 294–314 (PVTPKGKWVFGILIGLLICLI), and 318–338 (GNYPDGVAFAVLLANICVPLI).

The protein belongs to the NqrB/RnfD family. The complex is composed of six subunits: RnfA, RnfB, RnfC, RnfD, RnfE and RnfG. FMN is required as a cofactor.

The protein localises to the cell inner membrane. Functionally, part of a membrane-bound complex that couples electron transfer with translocation of ions across the membrane. This chain is Ion-translocating oxidoreductase complex subunit D, found in Actinobacillus succinogenes (strain ATCC 55618 / DSM 22257 / CCUG 43843 / 130Z).